We begin with the raw amino-acid sequence, 746 residues long: Stromal interaction molecule 2 (746 aa).

The signal sequence occupies residues 1-14 (MLVLGLLVAGAADG). The Extracellular portion of the chain corresponds to 15 to 218 (CELVPRHLRG…RPPHNWMKDF (204 aa)). Residues 67–102 (FSLEALQTIHKQMDDDKDGGIEVEESDEFIREDMKY) enclose the EF-hand domain. Positions 80, 82, 84, and 91 each coordinate Ca(2+). An N-linked (GlcNAc...) asparagine glycan is attached at Asn-135. Positions 136 to 204 (WTLEDTLQWL…QLKALDVVLF (69 aa)) constitute an SAM domain. Residues 219 to 235 (ILTVSIVIGVGGCWFAY) form a helical membrane-spanning segment. At 236–746 (TQNKTSKEHV…IKSLFKKKSK (511 aa)) the chain is on the cytoplasmic side. Positions 247–394 (KMMKDLESLQ…EKIKKKRSTV (148 aa)) form a coiled coil. The interval 483–562 (DLDEDTPPIV…SLPSPDPDIL (80 aa)) is disordered. Ser-523 is subject to Phosphoserine. Residues 537 to 549 (HPSHPRHPHHPQH) show a composition bias toward basic residues. 8 positions are modified to phosphoserine: Ser-609, Ser-621, Ser-640, Ser-650, Ser-661, Ser-665, Ser-680, and Ser-697. The disordered stretch occupies residues 685–746 (SSGIPVPKPR…IKSLFKKKSK (62 aa)). Basic and acidic residues predominate over residues 723–732 (DLCHNGEKSK). Basic residues predominate over residues 733–746 (KPSKIKSLFKKKSK).

As to quaternary structure, oligomer with STIM1. Interacts with ORAI1. In terms of processing, glycosylated. Post-translationally, phosphorylated predominantly on Ser residues. As to expression, expressed in all tissues and tumor cell lines examined.

Its subcellular location is the endoplasmic reticulum membrane. In terms of biological role, plays a role in mediating store-operated Ca(2+) entry (SOCE), a Ca(2+) influx following depletion of intracellular Ca(2+) stores. Functions as a highly sensitive Ca(2+) sensor in the endoplasmic reticulum which activates both store-operated and store-independent Ca(2+)-influx. Regulates basal cytosolic and endoplasmic reticulum Ca(2+) concentrations. Upon mild variations of the endoplasmic reticulum Ca(2+) concentration, translocates from the endoplasmic reticulum to the plasma membrane where it probably activates the Ca(2+) release-activated Ca(2+) (CRAC) channels ORAI1, ORAI2 and ORAI3. May inhibit STIM1-mediated Ca(2+) influx. The chain is Stromal interaction molecule 2 (STIM2) from Homo sapiens (Human).